The chain runs to 494 residues: Glutamate--tRNA ligase (494 aa).

Positions 10-20 match the 'HIGH' region motif; sequence PSPTGDPHVGT. Positions 107, 109, 134, and 136 each coordinate Zn(2+). The short motif at 251 to 255 is the 'KMSKS' region element; that stretch reads KLSKR. Residue K254 coordinates ATP.

This sequence belongs to the class-I aminoacyl-tRNA synthetase family. Glutamate--tRNA ligase type 1 subfamily. In terms of assembly, monomer. It depends on Zn(2+) as a cofactor.

It is found in the cytoplasm. The catalysed reaction is tRNA(Glu) + L-glutamate + ATP = L-glutamyl-tRNA(Glu) + AMP + diphosphate. In terms of biological role, catalyzes the attachment of glutamate to tRNA(Glu) in a two-step reaction: glutamate is first activated by ATP to form Glu-AMP and then transferred to the acceptor end of tRNA(Glu). The polypeptide is Glutamate--tRNA ligase (Pseudomonas paraeruginosa (strain DSM 24068 / PA7) (Pseudomonas aeruginosa (strain PA7))).